The primary structure comprises 154 residues: Transcriptional repressor NrdR (154 aa).

A zinc finger spans residues Cys-3 to Cys-34. Residues Leu-46 to Asp-136 form the ATP-cone domain.

It belongs to the NrdR family. It depends on Zn(2+) as a cofactor.

Functionally, negatively regulates transcription of bacterial ribonucleotide reductase nrd genes and operons by binding to NrdR-boxes. The chain is Transcriptional repressor NrdR from Mycolicibacterium vanbaalenii (strain DSM 7251 / JCM 13017 / BCRC 16820 / KCTC 9966 / NRRL B-24157 / PYR-1) (Mycobacterium vanbaalenii).